Consider the following 315-residue polypeptide: uncharacterized protein (315 aa).

The next 3 helical transmembrane spans lie at 18–38 (IWFI…IISG), 202–222 (ILAI…LAGI), and 244–264 (LIYA…VIVL). The interval 288–315 (VCSTGNRSSGSTDQDISTTKQQSQEAVA) is disordered.

It is found in the membrane. This is an uncharacterized protein from Saccharomyces cerevisiae (strain ATCC 204508 / S288c) (Baker's yeast).